Reading from the N-terminus, the 238-residue chain is Endothelin-3 (238 aa).

Residues 1–16 (MEPGLWLLFGLTVTSA) form the signal peptide. The propeptide occupies 17 to 94 (AGFVPCSQSG…AEGAPEHHRS (78 aa)). The disordered stretch occupies residues 24 to 89 (QSGDAGRRGV…GQEQAAEGAP (66 aa)). Cystine bridges form between C97–C111 and C99–C107. The propeptide occupies 118–238 (INTPEQTVPY…PRCLFQEGAP (121 aa)). The interval 159–173 (CACVGRYDKACLHFC) is endothelin-like. A disordered region spans residues 183–219 (SRTAEKTDKEEEGKVEVKDQQSKQALDLHHPKLMPGS). Positions 185-212 (TAEKTDKEEEGKVEVKDQQSKQALDLHH) are enriched in basic and acidic residues.

The protein belongs to the endothelin/sarafotoxin family. As to expression, expressed in trophoblasts and placental stem villi vessels, but not in cultured placental smooth muscle cells.

The protein localises to the secreted. Its function is as follows. Endothelins are endothelium-derived vasoconstrictor peptides. The polypeptide is Endothelin-3 (EDN3) (Homo sapiens (Human)).